The chain runs to 576 residues: Arginine--tRNA ligase (576 aa).

The short motif at alanine 126–histidine 136 is the 'HIGH' region element.

Belongs to the class-I aminoacyl-tRNA synthetase family. As to quaternary structure, monomer.

Its subcellular location is the cytoplasm. The catalysed reaction is tRNA(Arg) + L-arginine + ATP = L-arginyl-tRNA(Arg) + AMP + diphosphate. This is Arginine--tRNA ligase (argS) from Rickettsia prowazekii (strain Madrid E).